Consider the following 254-residue polypeptide: Imidazole glycerol phosphate synthase subunit HisF (254 aa).

Catalysis depends on residues Asp-11 and Asp-130.

This sequence belongs to the HisA/HisF family. As to quaternary structure, heterodimer of HisH and HisF.

It localises to the cytoplasm. It carries out the reaction 5-[(5-phospho-1-deoxy-D-ribulos-1-ylimino)methylamino]-1-(5-phospho-beta-D-ribosyl)imidazole-4-carboxamide + L-glutamine = D-erythro-1-(imidazol-4-yl)glycerol 3-phosphate + 5-amino-1-(5-phospho-beta-D-ribosyl)imidazole-4-carboxamide + L-glutamate + H(+). It functions in the pathway amino-acid biosynthesis; L-histidine biosynthesis; L-histidine from 5-phospho-alpha-D-ribose 1-diphosphate: step 5/9. IGPS catalyzes the conversion of PRFAR and glutamine to IGP, AICAR and glutamate. The HisF subunit catalyzes the cyclization activity that produces IGP and AICAR from PRFAR using the ammonia provided by the HisH subunit. This Chromobacterium violaceum (strain ATCC 12472 / DSM 30191 / JCM 1249 / CCUG 213 / NBRC 12614 / NCIMB 9131 / NCTC 9757 / MK) protein is Imidazole glycerol phosphate synthase subunit HisF.